The chain runs to 40 residues: Large ribosomal subunit protein bL36 (40 aa).

The protein belongs to the bacterial ribosomal protein bL36 family.

This Corynebacterium diphtheriae (strain ATCC 700971 / NCTC 13129 / Biotype gravis) protein is Large ribosomal subunit protein bL36.